A 1194-amino-acid polypeptide reads, in one-letter code: MSLPQRPGKTSPRREETSAFREPSRRRRRESDSLSNNDPTSPRHHRHHRSHSSRHQHDIDEERAEEGGIRRKRSLVKPERGRMDPSHPNYLYRQKTQNMPTYNPMTGNEPLIHEEGEAETNSTPSMDSKRKDALYGAHGNVNKPMERVPTRHRSKKRKGSRKISKREAAAEKRRRKAMEQVRPPSLWTTYCSVITFWAPDFVLKCFGMPQKAQRSAWREKIGLISIILMIAAFVGFLTFGFTATVCGTPPTRLKINEIGSGYMIFHGQAYDLTKSTHPAAAGIPDMTNVLYDLPHKYGGQDGSFFFQEVNGACKGLITRTENSDIPTNSNGDLAWYFPCHAFNQDGSSEPNTTVSYYNGWACHTSGSARKSFYSLKNSGDVYFTWEDTKNTSRKLAVYSGNVLDLNLLNWFDDTQVNYPTKFKDLRDNDDIRGVDLTYYFQTGEDKQIGKCLSQIIKVGSIDTDTVGCIASQVVLYVSLIFILSIVIVKFAFALLFQWFLAPRFAAQKTSMGAVDSKARNQQIEDWSNDIYRPGPRLADPVPGDRMSKRASFLPTTSRFSSPYTVSNGGKQKPQWVTMASQNSTTRLVPPASGTTPSIYRQSHNGLGNVSVDNSRLNPSASRTSLVQDSRYSTVIPDSEGIGSAGYVHELVVPQPPPDWQPYGFPLAHAMCLVTCYSEGEEGIRTTLDSIALTDYPNSHKSIVVICDGIIKGKGEEFSTPDIVLRMMRDPIIPPEEVEAFSYVAVATGSKRHNMAKVYAGFYDYGEHSIIPVEKQQRVPMMIIVKCGTPAEATAAKPGNRGKRDSQIILMSFLQKVMFDERMTELEYEMFNGLLHVTGIPPDFYEVVLMVDADTKVFPDSLTHMISAMVKDPEVMGLCGETKIANKTDSWVTMIQVFEYFVSHHQSKAFESVFGGVTCLPGCFSMYRIKAPKGGQNYWVPILANPDIVEHYSENVVDTLHKKNLLLLGEDRYLSTLMLRTFPKRKQIFVPQAVCKTVVPDKFMVLLSQRRRWINSTVHNLMELVLVRDLCGTFCFSMQFVIFVELVGTVVLPAAISFTIYVVVSSIIKQPVQIIPLVLLALILGLPGVLVVVTAHRLVYVLWMLVYLISLPIWNFVLPTYAYWKFDDFSWGDTRKTAGEKDKGHEDGEGEFDSSKITMKRWRDFEKDRRLRMQAGWQLPVGGHPPMPYEPYPEY.

Disordered stretches follow at residues 1–91 and 136–177; these read MSLP…PNYL and GAHG…RRKA. A compositionally biased stretch (basic and acidic residues) spans 12–23; it reads PRREETSAFREP. A compositionally biased stretch (basic residues) spans 42-54; that stretch reads PRHHRHHRSHSSR. Basic and acidic residues-rich tracts occupy residues 55-69 and 76-85; these read HQHD…EGGI and VKPERGRMDP. The span at 150–164 shows a compositional bias: basic residues; the sequence is TRHRSKKRKGSRKIS. A helical membrane pass occupies residues 221–241; the sequence is IGLISIILMIAAFVGFLTFGF. Residues N351 and N390 are each glycosylated (N-linked (GlcNAc...) asparagine). The chain crosses the membrane as a helical span at residues 476–496; it reads YVSLIFILSIVIVKFAFALLF. Residues N582, N608, N885, and N1014 are each glycosylated (N-linked (GlcNAc...) asparagine). 3 consecutive transmembrane segments (helical) span residues 1039-1059, 1073-1093, and 1097-1117; these read FVIF…SFTI, IIPL…VVVT, and LVYV…NFVL.

It belongs to the chitin synthase family. Class V subfamily.

The protein localises to the cell membrane. The enzyme catalyses [(1-&gt;4)-N-acetyl-beta-D-glucosaminyl](n) + UDP-N-acetyl-alpha-D-glucosamine = [(1-&gt;4)-N-acetyl-beta-D-glucosaminyl](n+1) + UDP + H(+). Polymerizes chitin, a structural polymer of the cell wall and septum, by transferring the sugar moiety of UDP-GlcNAc to the non-reducing end of the growing chitin polymer. Responsible for synthesis of 30-40% of the chitin in the cells. ChsA and chsD play redundant functions in conidia formation. The chitin synthesized by the chsD-encoded isozyme contributes to the rigidity of the walls of germinating conidia, of the subapical region of hyphae, and of conidiophore vesicles, but is not necessary for normal morphology of these cells. This Emericella nidulans (strain FGSC A4 / ATCC 38163 / CBS 112.46 / NRRL 194 / M139) (Aspergillus nidulans) protein is Chitin synthase C.